The following is an 81-amino-acid chain: Ferredoxin (81 aa).

The 4Fe-4S ferredoxin-type domain maps to 2-30 (KYTIVDKETCIACGACGAAAPDIYDYDED). Cys11, Cys14, Cys17, and Cys61 together coordinate [4Fe-4S] cluster.

[4Fe-4S] cluster serves as cofactor.

Functionally, ferredoxins are iron-sulfur proteins that transfer electrons in a wide variety of metabolic reactions. This Geobacillus stearothermophilus (Bacillus stearothermophilus) protein is Ferredoxin (fer).